The chain runs to 781 residues: AP-3 complex subunit beta (781 aa).

5 HEAT repeats span residues P113–Y151, I153–I186, S187–Q224, D294–F332, and P521–D559. Disordered stretches follow at residues K694–H713 and A731–E781. Over residues A699 to S712 the composition is skewed to polar residues. The span at S746 to S758 shows a compositional bias: acidic residues. Positions G759–S774 are enriched in low complexity.

The protein belongs to the adaptor complexes large subunit family. Adaptor protein complex 3 (AP-3) is a heterotetramer composed of 2 large adaptins (APL5 and APL6), a medium adaptin (APM3) and a small adaptin (APS3).

The protein localises to the golgi apparatus. It localises to the cytoplasmic vesicle. It is found in the clathrin-coated vesicle membrane. Its function is as follows. Part of the AP-3 complex, an adaptor-related complex which is not clathrin-associated. The complex is associated with the Golgi region as well as more peripheral structures. It facilitates the budding of vesicles from the Golgi membrane and may be directly involved in trafficking to the vacuole. This Eremothecium gossypii (strain ATCC 10895 / CBS 109.51 / FGSC 9923 / NRRL Y-1056) (Yeast) protein is AP-3 complex subunit beta (APL6).